We begin with the raw amino-acid sequence, 183 residues long: MKQLLEFIPLILFFAVYKLVGVQAAAITLVLATILQLILVRILFKKLETSQWIVGLSVIIFGILTAYFDDLAFLKWKVTIINGLFAAVLLISQYVFHKPVVKMLLAKELSLPTQVWNRLNLGWAIFFIICMLINIIISQLFSDDTWATFKTFGFTGLSLVAVIITGIYLYPYIKKLENNNEQK.

Transmembrane regions (helical) follow at residues 22 to 44 (VQAAAITLVLATILQLILVRILF), 53 to 73 (IVGLSVIIFGILTAYFDDLAF), 76 to 96 (WKVTIINGLFAAVLLISQYVF), 121 to 141 (LGWAIFFIICMLINIIISQLF), and 153 to 173 (GFTGLSLVAVIITGIYLYPYI).

The protein belongs to the YciB family.

It localises to the cell inner membrane. In terms of biological role, plays a role in cell envelope biogenesis, maintenance of cell envelope integrity and membrane homeostasis. The protein is Inner membrane-spanning protein YciB of Haemophilus ducreyi (strain 35000HP / ATCC 700724).